We begin with the raw amino-acid sequence, 188 residues long: Thymidine kinase (188 aa).

An ATP-binding site is contributed by 17–24 (GPMFAGKT). E92 serves as the catalytic Proton acceptor. F121 contributes to the substrate binding site. Zn(2+)-binding residues include C146 and C149. 166 to 170 (LILAG) contacts substrate. C179 and C182 together coordinate Zn(2+).

The protein belongs to the thymidine kinase family.

The enzyme catalyses thymidine + ATP = dTMP + ADP + H(+). Functionally, phosphorylates thymidine. ASFV replicates in the cytoplasm of infected cells and contains genes encoding a number of enzymes needed for DNA synthesis, including thymidine kinase. Important for growth in swine macrophages in vitro and is a virus virulence factor in swine. This is Thymidine kinase from Ornithodoros (relapsing fever ticks).